Consider the following 120-residue polypeptide: Large ribosomal subunit protein uL18 (120 aa).

Belongs to the universal ribosomal protein uL18 family. In terms of assembly, part of the 50S ribosomal subunit; part of the 5S rRNA/L5/L18/L25 subcomplex. Contacts the 5S and 23S rRNAs.

In terms of biological role, this is one of the proteins that bind and probably mediate the attachment of the 5S RNA into the large ribosomal subunit, where it forms part of the central protuberance. This Oleidesulfovibrio alaskensis (strain ATCC BAA-1058 / DSM 17464 / G20) (Desulfovibrio alaskensis) protein is Large ribosomal subunit protein uL18.